Here is a 393-residue protein sequence, read N- to C-terminus: Ethanol acetyltransferase 1 (393 aa).

Residues 1–25 (MHFTRTLFNQVASKASRQLPVQKRV) constitute a mitochondrion transit peptide. Residues 49–151 (PIVFVHGIFG…GVIIDNSPIE (103 aa)) enclose the AB hydrolase-1 domain. Active-site charge relay system residues include Ser122, Asp146, and His296. A compositionally biased stretch (basic and acidic residues) spans 343–354 (AKHAQQIEELRK). Residues 343–393 (AKHAQQIEELRKVTSTSESSIPHSTQSSEQAFTENIDLARQEREHQKSVSA) are disordered. Positions 355–375 (VTSTSESSIPHSTQSSEQAFT) are enriched in polar residues. A compositionally biased stretch (basic and acidic residues) spans 379-393 (DLARQEREHQKSVSA).

Belongs to the AB hydrolase superfamily.

The protein localises to the mitochondrion. It carries out the reaction ethanol + acetyl-CoA = ethyl acetate + CoA. The catalysed reaction is acetyl-CoA + H2O = acetate + CoA + H(+). It catalyses the reaction ethyl acetate + H2O = ethanol + acetate + H(+). Its function is as follows. Alcohol acetyltransferase that catalyzes the synthesis of ethyl acetate from ethanol and acetyl-CoA. Can also function as a thioesterase by hydrolyzing acetyl-CoA in the absence of ethanol, as well as esterase hydrolyzing ethyl acetate. In Wickerhamomyces ciferrii (strain ATCC 14091 / BCRC 22168 / CBS 111 / JCM 3599 / NBRC 0793 / NRRL Y-1031 F-60-10) (Yeast), this protein is Ethanol acetyltransferase 1 (EAT1).